The following is a 415-amino-acid chain: SNF1 protein kinase subunit beta-2 (415 aa).

Disordered stretches follow at residues 1 to 43 (MGTT…EMDA), 55 to 158 (KCSD…PSEI), and 249 to 276 (EKNP…SSIA). Residue G2 is the site of N-myristoyl glycine attachment. Over residues 9-19 (AQKKQTTKKCR) the composition is skewed to basic residues. The span at 55–69 (KCSDSQDAGQPSREG) shows a compositional bias: polar residues. At S66 the chain carries Phosphoserine. Composition is skewed to basic and acidic residues over residues 122–150 (PKQD…RAKE) and 249–264 (EKNP…EADS). A kinase-interacting sequence (KIS); required for interaction with SNF1 region spans residues 154-335 (GPSEIKSSLM…LDRQQSNTDT (182 aa)). Phosphoserine is present on S298. Positions 336–415 (SWLTPPQLPP…QILYTPIESS (80 aa)) are association with SNF1 kinase complex (ASC) domain; required for interaction with SNF4.

This sequence belongs to the 5'-AMP-activated protein kinase beta subunit family. In terms of assembly, component of the SNF1 kinase complex, a heterotrimeric complex composed of the catalytic alpha subunit SNF1, one of the three related beta subunits SIP1, SIP2 or GAL83, and the regulatory gamma subunit SNF4. The beta subunit serves as a bridge between the catalytic and the regulatory subunit. Interacts (via KIS domain) with SNF1. Interacts (via ASC domain) with SNF4. Post-translationally, phosphorylated by SNF1 in vitro.

It localises to the cytoplasm. The protein resides in the cell membrane. In terms of biological role, beta subunit of the SNF1 kinase complex, which is required for transcriptional, metabolic, and developmental adaptations in response to glucose limitation. Has a structural role, mediating heterotrimer formation, and a regulatory role, defining carbon source-regulated subcellular location and substrate specificity of the SNF1 kinase complex. Involved in the regulation of aging. Acts as a negative regulator of nuclear SNF1 activity in young cells by sequestering its activating gamma subunit at the plasma membrane. In Saccharomyces cerevisiae (strain ATCC 204508 / S288c) (Baker's yeast), this protein is SNF1 protein kinase subunit beta-2 (SIP2).